A 432-amino-acid chain; its full sequence is Enolase (432 aa).

Residue Gln167 participates in (2R)-2-phosphoglycerate binding. Glu209 (proton donor) is an active-site residue. Residues Asp246, Glu291, and Asp318 each contribute to the Mg(2+) site. (2R)-2-phosphoglycerate-binding residues include Lys343, Arg372, Ser373, and Lys394. Lys343 acts as the Proton acceptor in catalysis.

The protein belongs to the enolase family. As to quaternary structure, component of the RNA degradosome, a multiprotein complex involved in RNA processing and mRNA degradation. It depends on Mg(2+) as a cofactor.

Its subcellular location is the cytoplasm. It localises to the secreted. It is found in the cell surface. It catalyses the reaction (2R)-2-phosphoglycerate = phosphoenolpyruvate + H2O. It functions in the pathway carbohydrate degradation; glycolysis; pyruvate from D-glyceraldehyde 3-phosphate: step 4/5. Functionally, catalyzes the reversible conversion of 2-phosphoglycerate (2-PG) into phosphoenolpyruvate (PEP). It is essential for the degradation of carbohydrates via glycolysis. This is Enolase from Aliivibrio fischeri (strain ATCC 700601 / ES114) (Vibrio fischeri).